The primary structure comprises 123 residues: Ribonuclease P protein component (123 aa).

This sequence belongs to the RnpA family. In terms of assembly, consists of a catalytic RNA component (M1 or rnpB) and a protein subunit.

It catalyses the reaction Endonucleolytic cleavage of RNA, removing 5'-extranucleotides from tRNA precursor.. In terms of biological role, RNaseP catalyzes the removal of the 5'-leader sequence from pre-tRNA to produce the mature 5'-terminus. It can also cleave other RNA substrates such as 4.5S RNA. The protein component plays an auxiliary but essential role in vivo by binding to the 5'-leader sequence and broadening the substrate specificity of the ribozyme. The sequence is that of Ribonuclease P protein component from Streptococcus pneumoniae serotype 4 (strain ATCC BAA-334 / TIGR4).